Consider the following 461-residue polypeptide: L-seryl-tRNA(Sec) selenium transferase (461 aa).

K291 is subject to N6-(pyridoxal phosphate)lysine.

This sequence belongs to the SelA family. Requires pyridoxal 5'-phosphate as cofactor.

It localises to the cytoplasm. It catalyses the reaction L-seryl-tRNA(Sec) + selenophosphate + H(+) = L-selenocysteinyl-tRNA(Sec) + phosphate. Its pathway is aminoacyl-tRNA biosynthesis; selenocysteinyl-tRNA(Sec) biosynthesis; selenocysteinyl-tRNA(Sec) from L-seryl-tRNA(Sec) (bacterial route): step 1/1. Functionally, converts seryl-tRNA(Sec) to selenocysteinyl-tRNA(Sec) required for selenoprotein biosynthesis. In Caldanaerobacter subterraneus subsp. tengcongensis (strain DSM 15242 / JCM 11007 / NBRC 100824 / MB4) (Thermoanaerobacter tengcongensis), this protein is L-seryl-tRNA(Sec) selenium transferase.